We begin with the raw amino-acid sequence, 251 residues long: GTP cyclohydrolase FolE2 (251 aa).

This sequence belongs to the GTP cyclohydrolase IV family.

The enzyme catalyses GTP + H2O = 7,8-dihydroneopterin 3'-triphosphate + formate + H(+). It functions in the pathway cofactor biosynthesis; 7,8-dihydroneopterin triphosphate biosynthesis; 7,8-dihydroneopterin triphosphate from GTP: step 1/1. Functionally, converts GTP to 7,8-dihydroneopterin triphosphate. The protein is GTP cyclohydrolase FolE2 of Desulfotalea psychrophila (strain LSv54 / DSM 12343).